Consider the following 204-residue polypeptide: MVCGGFSCSKNCLCALNLLYTLVSLLLIGIAAWGIGFGLISSLRVVGVVIAVGIFLFLIALVGLIGAVKHHQVLLFFYMIILLLVFIVQFSVSCACLALNREQQGQLLEVGWNNTASARNDIQRNLNCCGFRNYNPNDTCPASCAKSNQKCSSCAPIIGEYAGEVLRFVGGIGLFFSFTEILGVWLTYRYRNQKDPRANPSAFL.

At 1–19 (MVCGGFSCSKNCLCALNLL) the chain is on the cytoplasmic side. Residues 20–40 (YTLVSLLLIGIAAWGIGFGLI) form a helical membrane-spanning segment. At 41-44 (SSLR) the chain is on the extracellular side. A helical transmembrane segment spans residues 45–65 (VVGVVIAVGIFLFLIALVGLI). Topologically, residues 66–72 (GAVKHHQ) are cytoplasmic. The helical transmembrane segment at 73–93 (VLLFFYMIILLLVFIVQFSVS) threads the bilayer. The Extracellular segment spans residues 94–167 (CACLALNREQ…IGEYAGEVLR (74 aa)). Asn113 and Asn137 each carry an N-linked (GlcNAc...) asparagine glycan. Ser143 is modified (phosphoserine). A helical transmembrane segment spans residues 168-188 (FVGGIGLFFSFTEILGVWLTY). Over 189 to 204 (RYRNQKDPRANPSAFL) the chain is Cytoplasmic.

The protein belongs to the tetraspanin (TM4SF) family.

Its subcellular location is the membrane. The polypeptide is Tetraspanin-13 (Tspan13) (Rattus norvegicus (Rat)).